The primary structure comprises 326 residues: Flap endonuclease 1 (326 aa).

The tract at residues 1-100 (MGNADLRSLA…DEVEKRREQR (100 aa)) is N-domain. Asp-28, Asp-82, Glu-154, Glu-156, Asp-175, Asp-177, and Asp-225 together coordinate Mg(2+). An I-domain region spans residues 118–246 (RVAKLDSRTQ…TAVKDLHEHG (129 aa)). The segment at 318 to 326 (VQTGLDRWA) is interaction with PCNA.

Belongs to the XPG/RAD2 endonuclease family. FEN1 subfamily. As to quaternary structure, interacts with PCNA. PCNA stimulates the nuclease activity without altering cleavage specificity. Mg(2+) is required as a cofactor.

Structure-specific nuclease with 5'-flap endonuclease and 5'-3' exonuclease activities involved in DNA replication and repair. During DNA replication, cleaves the 5'-overhanging flap structure that is generated by displacement synthesis when DNA polymerase encounters the 5'-end of a downstream Okazaki fragment. Binds the unpaired 3'-DNA end and kinks the DNA to facilitate 5' cleavage specificity. Cleaves one nucleotide into the double-stranded DNA from the junction in flap DNA, leaving a nick for ligation. Also involved in the base excision repair (BER) pathway. Acts as a genome stabilization factor that prevents flaps from equilibrating into structures that lead to duplications and deletions. Also possesses 5'-3' exonuclease activity on nicked or gapped double-stranded DNA. The sequence is that of Flap endonuclease 1 from Haloarcula marismortui (strain ATCC 43049 / DSM 3752 / JCM 8966 / VKM B-1809) (Halobacterium marismortui).